Consider the following 77-residue polypeptide: Putative membrane protein insertion efficiency factor (77 aa).

It belongs to the UPF0161 family.

The protein localises to the cell membrane. Functionally, could be involved in insertion of integral membrane proteins into the membrane. This chain is Putative membrane protein insertion efficiency factor, found in Geobacillus sp. (strain WCH70).